A 408-amino-acid polypeptide reads, in one-letter code: Multidrug resistance protein MdtG (408 aa).

A run of 11 helical transmembrane segments spans residues 16–36 (LIVAWLGCFLTGAAFSLVMPF), 58–78 (IVFSITFLFSAIASPFWGGLA), 92–112 (LGMGIVMVLMGLAQNIWQFLI), 115–135 (ALLGLLGGFVPNANALIATQV), 146–166 (TLSTGGVSGALLGPMAGGLLA), 173–193 (PVFFITASVLILCFFVTLFCI), 224–244 (LFVTTLIIQVATGSIAPILTL), 256–276 (VAFISGMIASVPGVAALLSAP), 290–310 (ILITALIFSVLLLIPMSYVQT), 319–339 (FLLGAADGALLPAVQTLLVYN), and 378–398 (AVFLVTAGVVLFNAVYSWNSL).

It belongs to the major facilitator superfamily. DHA1 family. MdtG (TC 2.A.1.2.20) subfamily.

The protein localises to the cell inner membrane. In terms of biological role, confers resistance to fosfomycin and deoxycholate. In Escherichia coli O127:H6 (strain E2348/69 / EPEC), this protein is Multidrug resistance protein MdtG.